The sequence spans 615 residues: (+)-alpha-pinene synthase TPS2, chloroplastic (615 aa).

The N-terminal 55 residues, 1 to 55 (MHCMAVRHFAPSSSLSIFSSTNINNHFFGREIFTPKTSNITTKKSRSRPNCNPIQ), are a transit peptide targeting the chloroplast. Positions 330, 367, 371, 509, and 512 each coordinate (2E)-geranyl diphosphate. Asp-367 and Asp-371 together coordinate Mg(2+). A DDXXD motif motif is present at residues 367 to 371 (DDIYD). Residues Asp-512, Thr-516, and Glu-520 each contribute to the Mg(2+) site.

This sequence belongs to the terpene synthase family. Tpsb subfamily. The cofactor is Mg(2+). Mn(2+) is required as a cofactor. Requires K(+) as cofactor. As to expression, trichome.

The protein resides in the plastid. It localises to the chloroplast. It carries out the reaction (2E)-geranyl diphosphate = (1R,5R)-alpha-pinene + diphosphate. The enzyme catalyses (2E)-geranyl diphosphate = (1R,5R)-beta-pinene + diphosphate. The catalysed reaction is (2E)-geranyl diphosphate = (4S)-limonene + diphosphate. It catalyses the reaction (2E)-geranyl diphosphate = beta-myrcene + diphosphate. The protein operates within secondary metabolite biosynthesis; terpenoid biosynthesis. Its pathway is terpene metabolism; (-)-alpha-pinene biosynthesis; (-)-alpha-pinene from geranyl diphosphate: step 1/1. In terms of biological role, involved in monoterpene (C10) olefins biosynthesis, constituants of cannabinoids and terpenoids-rich resins. Catalyzes mainly the conversion of (2E)-geranyl diphosphate to (+)-alpha-pinene, and also produces minor products such as (-)-limonene, (+)-beta-pinene and beta-myrcene. The sequence is that of (+)-alpha-pinene synthase TPS2, chloroplastic from Cannabis sativa (Hemp).